A 119-amino-acid polypeptide reads, in one-letter code: Phytosulfokines 2 (119 aa).

A signal peptide spans 1 to 34; the sequence is MSTTRGVSSSSAAAALALLLLFALCFFSFHFAAA. Positions 35 to 109 are excised as a propeptide; that stretch reads ARAVPRDEHQ…RRLLSDAHLD (75 aa). Sulfotyrosine occurs at positions 110 and 112. Residues 115–119 constitute a propeptide that is removed on maturation; it reads HKNKP.

The protein belongs to the phytosulfokine family. Post-translationally, sulfation is important for activity and for the binding to a putative membrane receptor. In terms of processing, PSK-alpha is produced by endopeptidase digestion. PSK-beta is produced from PSK-alpha by exopeptidase digestion.

Its subcellular location is the secreted. Its function is as follows. Promotes plant cell differentiation, organogenesis and somatic embryogenesis as well as cell proliferation. The chain is Phytosulfokines 2 (PSK2) from Oryza sativa subsp. japonica (Rice).